The chain runs to 218 residues: GTP cyclohydrolase 1 (218 aa).

Cys109, His112, and Cys180 together coordinate Zn(2+).

Belongs to the GTP cyclohydrolase I family. As to quaternary structure, toroid-shaped homodecamer, composed of two pentamers of five dimers.

The enzyme catalyses GTP + H2O = 7,8-dihydroneopterin 3'-triphosphate + formate + H(+). It functions in the pathway cofactor biosynthesis; 7,8-dihydroneopterin triphosphate biosynthesis; 7,8-dihydroneopterin triphosphate from GTP: step 1/1. The protein is GTP cyclohydrolase 1 of Haemophilus ducreyi (strain 35000HP / ATCC 700724).